Consider the following 69-residue polypeptide: MTESRQTRLQVKCPTCQTAVVWKPENAFRPFCSQRCKLIDLGGWADGKYTVSSQTESLPEISEPDMAYR.

Positions 13, 16, 32, and 36 each coordinate Zn(2+).

The protein belongs to the DNA gyrase inhibitor YacG family. In terms of assembly, interacts with GyrB. Zn(2+) serves as cofactor.

Its function is as follows. Inhibits all the catalytic activities of DNA gyrase by preventing its interaction with DNA. Acts by binding directly to the C-terminal domain of GyrB, which probably disrupts DNA binding by the gyrase. In Neisseria meningitidis serogroup C / serotype 2a (strain ATCC 700532 / DSM 15464 / FAM18), this protein is DNA gyrase inhibitor YacG.